We begin with the raw amino-acid sequence, 298 residues long: N-acetylmuramic acid 6-phosphate etherase (298 aa).

The SIS domain maps to 55-218; that stretch reads IHAQVSGGGR…STGLMIKSGK (164 aa). Glu83 serves as the catalytic Proton donor. The active site involves Glu114.

The protein belongs to the GCKR-like family. MurNAc-6-P etherase subfamily. As to quaternary structure, homodimer.

The catalysed reaction is N-acetyl-D-muramate 6-phosphate + H2O = N-acetyl-D-glucosamine 6-phosphate + (R)-lactate. Its pathway is amino-sugar metabolism; 1,6-anhydro-N-acetylmuramate degradation. It participates in amino-sugar metabolism; N-acetylmuramate degradation. It functions in the pathway cell wall biogenesis; peptidoglycan recycling. Specifically catalyzes the cleavage of the D-lactyl ether substituent of MurNAc 6-phosphate, producing GlcNAc 6-phosphate and D-lactate. Together with AnmK, is also required for the utilization of anhydro-N-acetylmuramic acid (anhMurNAc) either imported from the medium or derived from its own cell wall murein, and thus plays a role in cell wall recycling. This chain is N-acetylmuramic acid 6-phosphate etherase, found in Escherichia coli O8 (strain IAI1).